The following is a 450-amino-acid chain: UDP-N-acetylmuramoylalanine--D-glutamate ligase (450 aa).

Position 119 to 125 (119 to 125 (GSNGKTT)) interacts with ATP.

It belongs to the MurCDEF family.

Its subcellular location is the cytoplasm. It carries out the reaction UDP-N-acetyl-alpha-D-muramoyl-L-alanine + D-glutamate + ATP = UDP-N-acetyl-alpha-D-muramoyl-L-alanyl-D-glutamate + ADP + phosphate + H(+). The protein operates within cell wall biogenesis; peptidoglycan biosynthesis. In terms of biological role, cell wall formation. Catalyzes the addition of glutamate to the nucleotide precursor UDP-N-acetylmuramoyl-L-alanine (UMA). This chain is UDP-N-acetylmuramoylalanine--D-glutamate ligase, found in Streptococcus pneumoniae serotype 4 (strain ATCC BAA-334 / TIGR4).